The primary structure comprises 843 residues: Urease (843 aa).

Positions 400 to 843 (GGIDCHVHFI…VPLSRNYFLF (444 aa)) constitute a Urease domain. Ni(2+)-binding residues include histidine 405, histidine 407, and lysine 488. Lysine 488 carries the N6-carboxylysine modification. Residue histidine 490 participates in substrate binding. Ni(2+) is bound by residues histidine 517 and histidine 543. The active-site Proton donor is histidine 591. Aspartate 631 contacts Ni(2+).

In the C-terminal section; belongs to the metallo-dependent hydrolases superfamily. Urease alpha subunit family. Homohexamer. Other oligomeric forms may exist depending on pH and presence of salts. Ni(2+) serves as cofactor. Carboxylation allows a single lysine to coordinate two nickel ions.

It carries out the reaction urea + 2 H2O + H(+) = hydrogencarbonate + 2 NH4(+). Its pathway is nitrogen metabolism; urea degradation; CO(2) and NH(3) from urea (urease route): step 1/1. In terms of biological role, urea hydrolase involved in nitrogen recycling from ureide, purine, and arginine catabolism. The polypeptide is Urease (Oryza sativa subsp. indica (Rice)).